A 208-amino-acid polypeptide reads, in one-letter code: Histone H1t (208 aa).

Polar residues predominate over residues 1 to 12 (MSETAPAASSTL). Residues 1-39 (MSETAPAASSTLVPAPVEKPATKRRGKKPGMATARKPRG) are disordered. Position 9 is a phosphoserine (Ser9). Positions 38 to 111 (RGFSVSKLIP…GASGSFKLSK (74 aa)) constitute an H15 domain. The residue at position 56 (Arg56) is a Citrulline. Residues 93–208 (GVLVQTKGTG…TDLRKAAGRK (116 aa)) are disordered. The segment covering 121-134 (KGKKSASAKAKKLG) has biased composition (basic residues). A Phosphoserine modification is found at Ser141. The segment covering 143–154 (KSSKTKVVKKPK) has biased composition (basic residues). Phosphothreonine is present on Thr156. Residues Ser163, Ser178, and Ser187 each carry the phosphoserine modification. Residues 199 to 208 (TDLRKAAGRK) are compositionally biased toward basic and acidic residues.

It belongs to the histone H1/H5 family. Post-translationally, phosphorylated in early spermatids. Citrullination at Arg-56 (H1R54ci) by PADI4 takes place within the DNA-binding site of H1 and results in its displacement from chromatin and global chromatin decondensation, thereby promoting pluripotency and stem cell maintenance. Testis-specific. Expressed in pachytene spermatocytes during meiotic prophase I.

It is found in the nucleus. Its subcellular location is the chromosome. In terms of biological role, testis-specific histone H1 that forms less compacted chromatin compared to other H1 histone subtypes. Formation of more relaxed chromatin may be required to promote chromatin architecture required for proper chromosome regulation during meiosis, such as homologous recombination. Histones H1 act as linkers that bind to nucleosomes and compact polynucleosomes into a higher-order chromatin configuration. This chain is Histone H1t, found in Rattus norvegicus (Rat).